The chain runs to 300 residues: Nicotinate-nucleotide pyrophosphorylase [carboxylating] (300 aa).

Positions 5–9 (QLLPK) are important for hexamer formation. Quinolinate contacts are provided by residues Arg107, 150 to 151 (RK), 172 to 173 (HR), Lys183, Glu213, Asp234, 260 to 262 (SGG), and Gly282.

It belongs to the NadC/ModD family. As to quaternary structure, hexamer formed by 3 homodimers.

The catalysed reaction is nicotinate beta-D-ribonucleotide + CO2 + diphosphate = quinolinate + 5-phospho-alpha-D-ribose 1-diphosphate + 2 H(+). The protein operates within cofactor biosynthesis; NAD(+) biosynthesis; nicotinate D-ribonucleotide from quinolinate: step 1/1. In terms of biological role, involved in the catabolism of quinolinic acid (QA). The protein is Nicotinate-nucleotide pyrophosphorylase [carboxylating] (qprt) of Dictyostelium discoideum (Social amoeba).